The primary structure comprises 616 residues: Chaperone protein HscA (616 aa).

Belongs to the heat shock protein 70 family.

In terms of biological role, chaperone involved in the maturation of iron-sulfur cluster-containing proteins. Has a low intrinsic ATPase activity which is markedly stimulated by HscB. Involved in the maturation of IscU. This is Chaperone protein HscA from Salmonella heidelberg (strain SL476).